The sequence spans 205 residues: Urease accessory protein UreG (205 aa).

GTP is bound at residue 14 to 21; it reads GPVGSGKT.

The protein belongs to the SIMIBI class G3E GTPase family. UreG subfamily. In terms of assembly, homodimer. UreD, UreF and UreG form a complex that acts as a GTP-hydrolysis-dependent molecular chaperone, activating the urease apoprotein by helping to assemble the nickel containing metallocenter of UreC. The UreE protein probably delivers the nickel.

It localises to the cytoplasm. In terms of biological role, facilitates the functional incorporation of the urease nickel metallocenter. This process requires GTP hydrolysis, probably effectuated by UreG. This Escherichia coli protein is Urease accessory protein UreG.